The chain runs to 72 residues: Translation initiation factor IF-1 (72 aa).

The 72-residue stretch at 1–72 (MSDKSIKMQA…SNGRITYRHK (72 aa)) folds into the S1-like domain.

The protein belongs to the IF-1 family. In terms of assembly, component of the 30S ribosomal translation pre-initiation complex which assembles on the 30S ribosome in the order IF-2 and IF-3, IF-1 and N-formylmethionyl-tRNA(fMet); mRNA recruitment can occur at any time during PIC assembly.

The protein resides in the cytoplasm. In terms of biological role, one of the essential components for the initiation of protein synthesis. Stabilizes the binding of IF-2 and IF-3 on the 30S subunit to which N-formylmethionyl-tRNA(fMet) subsequently binds. Helps modulate mRNA selection, yielding the 30S pre-initiation complex (PIC). Upon addition of the 50S ribosomal subunit IF-1, IF-2 and IF-3 are released leaving the mature 70S translation initiation complex. This Mycoplasmopsis pulmonis (strain UAB CTIP) (Mycoplasma pulmonis) protein is Translation initiation factor IF-1.